Consider the following 404-residue polypeptide: Tryptophan synthase beta chain (404 aa).

N6-(pyridoxal phosphate)lysine is present on K98.

Belongs to the TrpB family. Tetramer of two alpha and two beta chains. Pyridoxal 5'-phosphate serves as cofactor.

The enzyme catalyses (1S,2R)-1-C-(indol-3-yl)glycerol 3-phosphate + L-serine = D-glyceraldehyde 3-phosphate + L-tryptophan + H2O. It participates in amino-acid biosynthesis; L-tryptophan biosynthesis; L-tryptophan from chorismate: step 5/5. The beta subunit is responsible for the synthesis of L-tryptophan from indole and L-serine. This Rhodopseudomonas palustris (strain ATCC BAA-98 / CGA009) protein is Tryptophan synthase beta chain.